Here is a 157-residue protein sequence, read N- to C-terminus: uncharacterized protein (157 aa).

An N-acetyltransferase domain is found at 3 to 157; sequence FTLEDMTEEE…TNIRMRKQLC (155 aa).

Belongs to the acetyltransferase family.

This is an uncharacterized protein from Bacillus subtilis (strain 168).